Here is a 510-residue protein sequence, read N- to C-terminus: 2,3-bisphosphoglycerate-independent phosphoglycerate mutase (510 aa).

Aspartate 12 and serine 62 together coordinate Mn(2+). The Phosphoserine intermediate role is filled by serine 62. Substrate contacts are provided by residues histidine 121, 151 to 152, arginine 183, arginine 189, 258 to 261, and lysine 331; these read RD and RPDR. Mn(2+)-binding residues include aspartate 398, histidine 402, aspartate 439, histidine 440, and histidine 458.

It belongs to the BPG-independent phosphoglycerate mutase family. As to quaternary structure, monomer. Mn(2+) is required as a cofactor.

It carries out the reaction (2R)-2-phosphoglycerate = (2R)-3-phosphoglycerate. It functions in the pathway carbohydrate degradation; glycolysis; pyruvate from D-glyceraldehyde 3-phosphate: step 3/5. Catalyzes the interconversion of 2-phosphoglycerate and 3-phosphoglycerate. The polypeptide is 2,3-bisphosphoglycerate-independent phosphoglycerate mutase (Clostridioides difficile (strain 630) (Peptoclostridium difficile)).